The chain runs to 308 residues: MRQINQTQVTEFLLLGLSDGPHTEQLLFIVLLGVYLVTVLGNLLLISLVHVDSQLHTPMYFFLCNLSLADLCFSTNIVPQALVHLLSRKKVIAFTLCAARLLFFLIFGCTQCALLAVMSYDRYVAICNPLRYPNIMTWKVCVQLATGSWTSGILVSVVDTTFILRLPYRGSNSIAHFFCEAPALLILASTDTHASEMAIFLMGVVILLIPVFLILVSYGRIIVTVVKMKSTVGSLKAFSTCGSHLMVVILFYGSAIITYMTPKSSKQQEKSVSVFYAIVTPMLNPLIYSLRNKDVKAALRKVATRNFP.

Residues 1 to 25 (MRQINQTQVTEFLLLGLSDGPHTEQ) lie on the Extracellular side of the membrane. The N-linked (GlcNAc...) asparagine glycan is linked to Asn-5. A helical membrane pass occupies residues 26 to 49 (LLFIVLLGVYLVTVLGNLLLISLV). Residues 50–57 (HVDSQLHT) lie on the Cytoplasmic side of the membrane. The chain crosses the membrane as a helical span at residues 58–79 (PMYFFLCNLSLADLCFSTNIVP). The Extracellular portion of the chain corresponds to 80–100 (QALVHLLSRKKVIAFTLCAAR). Residues 101–120 (LLFFLIFGCTQCALLAVMSY) traverse the membrane as a helical segment. Residues 121-139 (DRYVAICNPLRYPNIMTWK) are Cytoplasmic-facing. The helical transmembrane segment at 140 to 158 (VCVQLATGSWTSGILVSVV) threads the bilayer. Residues 159-195 (DTTFILRLPYRGSNSIAHFFCEAPALLILASTDTHAS) are Extracellular-facing. A helical membrane pass occupies residues 196–219 (EMAIFLMGVVILLIPVFLILVSYG). Residues 220-236 (RIIVTVVKMKSTVGSLK) are Cytoplasmic-facing. Residues 237 to 259 (AFSTCGSHLMVVILFYGSAIITY) traverse the membrane as a helical segment. Residues 260–270 (MTPKSSKQQEK) lie on the Extracellular side of the membrane. A helical membrane pass occupies residues 271-290 (SVSVFYAIVTPMLNPLIYSL). Over 291-308 (RNKDVKAALRKVATRNFP) the chain is Cytoplasmic.

The protein belongs to the G-protein coupled receptor 1 family.

The protein localises to the cell membrane. Functionally, odorant receptor. The polypeptide is Olfactory receptor 2D2 (OR2D2) (Homo sapiens (Human)).